The primary structure comprises 767 residues: Slo-interacting protein 1 (767 aa).

A PDZ domain is found at 202–280; that stretch reads QQSSTDTNKG…SVTLLVSRIL (79 aa). 2 disordered regions span residues 521–557 and 744–767; these read GNAAAPGEEVDNSSSAYNTGDSNNSASPHQNTTNPDE and KEERKRHIERAREKRHHQTQQQQQ. Over residues 532 to 555 the composition is skewed to polar residues; the sequence is NSSSAYNTGDSNNSASPHQNTTNP. A compositionally biased stretch (basic and acidic residues) spans 744–755; sequence KEERKRHIERAR.

Interacts with Slo. In embryos, it is expressed throughout the CNS and in several peripheral locations. Colocalizes with Slo.

Functionally, may selectively reduce calcium-activated potassium channel (Slo) currents by reducing the number of Slo channels in the plasma membrane. This is Slo-interacting protein 1 (Slip1) from Drosophila melanogaster (Fruit fly).